Consider the following 305-residue polypeptide: UDP-3-O-acyl-N-acetylglucosamine deacetylase (305 aa).

Residues His-78, His-237, and Asp-241 each coordinate Zn(2+). The active-site Proton donor is the His-264.

The protein belongs to the LpxC family. Zn(2+) serves as cofactor.

It carries out the reaction a UDP-3-O-[(3R)-3-hydroxyacyl]-N-acetyl-alpha-D-glucosamine + H2O = a UDP-3-O-[(3R)-3-hydroxyacyl]-alpha-D-glucosamine + acetate. Its pathway is glycolipid biosynthesis; lipid IV(A) biosynthesis; lipid IV(A) from (3R)-3-hydroxytetradecanoyl-[acyl-carrier-protein] and UDP-N-acetyl-alpha-D-glucosamine: step 2/6. Catalyzes the hydrolysis of UDP-3-O-myristoyl-N-acetylglucosamine to form UDP-3-O-myristoylglucosamine and acetate, the committed step in lipid A biosynthesis. This chain is UDP-3-O-acyl-N-acetylglucosamine deacetylase, found in Burkholderia ambifaria (strain MC40-6).